Reading from the N-terminus, the 781-residue chain is Mitochondrial inner membrane m-AAA protease component paraplegin (781 aa).

Residues 1–43 constitute a mitochondrion transit peptide; the sequence is MAAALLLLRGLRPGPEPRPRRLWGLLSGRGPGLSSGAGARRPY. Disordered stretches follow at residues 22-56 and 103-135; these read LWGLLSGRGPGLSSGAGARRPYAARGTPVGPAAAG and TSRMKQKNKDNDKPKGKTPEDDEEEKRRKERED. Residues 36–56 show a composition bias toward low complexity; that stretch reads GAGARRPYAARGTPVGPAAAG. Positions 44 to 105 are cleaved as a propeptide — removed in mature form; that stretch reads AARGTPVGPA…GSTLYFNTSR (62 aa). At 106 to 144 the chain is on the mitochondrial matrix side; it reads MKQKNKDNDKPKGKTPEDDEEEKRRKEREDQMYRERLRT. Positions 109 to 135 are enriched in basic and acidic residues; it reads KNKDNDKPKGKTPEDDEEEKRRKERED. A helical membrane pass occupies residues 145-165; the sequence is LFIIALVMSLLNSLSTSGGSI. The Mitochondrial intermembrane portion of the chain corresponds to 166–248; sequence SWADFVNEML…DRIPVSYKRT (83 aa). A helical transmembrane segment spans residues 249–269; the sequence is GFFGNALYALGMTAVGLAILW. Residues 270–781 lie on the Mitochondrial matrix side of the membrane; the sequence is YVFRLAGMTG…ASGEEEAPAP (512 aa). Residues alanine 312, glycine 352, cysteine 353, glycine 354, lysine 355, threonine 356, and leucine 357 each contribute to the ATP site. 3'-nitrotyrosine is present on tyrosine 505. Histidine 574 lines the Zn(2+) pocket. Glutamate 575 is a catalytic residue. Residues histidine 578 and aspartate 650 each coordinate Zn(2+). The interaction with PPIF stretch occupies residues 701 to 781; sequence HEAKLLVAKA…ASGEEEAPAP (81 aa).

This sequence in the N-terminal section; belongs to the AAA ATPase family. It in the C-terminal section; belongs to the peptidase M41 family. In terms of assembly, forms heterohexamers with SPG7 and AFG3L1. The m-AAA protease is either composed of homohexamers of AFG3L2 or heterohexamers of AFG3L1, AFG3L2 and/or SPG7. Component of the mitochondrial permeability transition pore complex (mPTPC), at least composed of SPG7, VDAC1 and PPIF. Interacts with MAIP1. Zn(2+) serves as cofactor. Upon import into the mitochondrion, the N-terminal transit peptide is cleaved by the mitochondrial-processing peptidase (MPP) to generate an intermediate form which undergoes a second proteolytic cleavage mediated by proteases AFG3L1 and/or AFG3L2 removing an additional N-terminal fragment to generate the proteolytically active mature form. As to expression, expressed in the brain and retina (at protein level).

Its subcellular location is the mitochondrion inner membrane. The catalysed reaction is ATP + H2O = ADP + phosphate + H(+). Its function is as follows. Catalytic component of the m-AAA protease, a protease that plays a key role in proteostasis of inner mitochondrial membrane proteins, and which is essential for axonal and neuron development. SPG7 possesses both ATPase and protease activities: the ATPase activity is required to unfold substrates, threading them into the internal proteolytic cavity for hydrolysis into small peptide fragments. The m-AAA protease exerts a dual role in the mitochondrial inner membrane: it mediates the processing of specific regulatory proteins and ensures protein quality control by degrading misfolded polypeptides. Mediates protein maturation of the mitochondrial ribosomal subunit MRPL32/bL32m by catalyzing the cleavage of the presequence of MRPL32/bL32m prior to assembly into the mitochondrial ribosome. Acts as a regulator of calcium in neurons by mediating degradation of SMDT1/EMRE before its assembly with the uniporter complex, limiting the availability of SMDT1/EMRE for MCU assembly and promoting efficient assembly of gatekeeper subunits with MCU. Also regulates mitochondrial calcium by catalyzing degradation of MCU. Plays a role in the formation and regulation of the mitochondrial permeability transition pore (mPTP) and its proteolytic activity is dispensable for this function. The sequence is that of Mitochondrial inner membrane m-AAA protease component paraplegin from Mus musculus (Mouse).